A 293-amino-acid polypeptide reads, in one-letter code: Insulin-like growth factor-binding protein 3 (293 aa).

Residues 1 to 27 (MQRARPALWAAALIALALLRGPPAARA) form the signal peptide. In terms of domain architecture, IGFBP N-terminal spans 36–119 (PVVRCEPCDA…LDGRGICANA (84 aa)). Cystine bridges form between Cys-40-Cys-69, Cys-43-Cys-71, Cys-51-Cys-72, Cys-60-Cys-75, Cys-83-Cys-96, and Cys-90-Cys-116. Asn-118 and Asn-138 each carry an N-linked (GlcNAc...) asparagine glycan. Disordered stretches follow at residues 132–166 (APPAPGNGSESEEDRSVDSMENQALPSTHRVPDSK) and 178–213 (KKGHAKDSQRYKVDYESQSTDTQNFSSESKRETEYG). Ser-150 is subject to Phosphoserine. The span at 178–192 (KKGHAKDSQRYKVDY) shows a compositional bias: basic and acidic residues. Over residues 193 to 204 (ESQSTDTQNFSS) the composition is skewed to polar residues. Asn-201 carries an N-linked (GlcNAc...) asparagine glycan. Phosphoserine is present on Ser-203. A Thyroglobulin type-1 domain is found at 212 to 287 (YGPCRREMED…DVKGKGDVHC (76 aa)). Disulfide bonds link Cys-215–Cys-242, Cys-253–Cys-264, and Cys-266–Cys-287.

As to quaternary structure, interacts with XLKD1. Binds IGF2 more than IGF1. Forms a ternary complex of about 140 to 150 kDa with IGF1 or IGF2 and a 85 kDa glycoprotein (ALS). Interacts with humanin; humanin competes with importin KPNB1 for binding to IGFBP3, blocking IGFBP3 nuclear import and IGFBP3-mediated apoptosis. Interacts with TMEM219. Interacts with RXRA; this interaction modulates the transcriptional activity of RXRA. Interacts with LRP1; this interaction mediates cell growth inhibition independent of IGF1. Post-translationally, phosphorylated by FAM20C in the extracellular medium. Phosphorylated by CK2; resulting in decreased nuclear localization.

It localises to the secreted. The protein localises to the nucleus. Its function is as follows. Multifunctional protein that plays a critical role in regulating the availability of IGFs such as IGF1 and IGF2 to their receptors and thereby regulates IGF-mediated cellular processes including proliferation, differentiation, and apoptosis in a cell-type specific manner. Also exhibits IGF-independent antiproliferative and apoptotic effects mediated by its receptor TMEM219/IGFBP-3R. Inhibits the positive effect of humanin on insulin sensitivity. Promotes testicular germ cell apoptosis. Acts via LRP-1/alpha2M receptor, also known as TGF-beta type V receptor, to mediate cell growth inhibition independent of IGF1. Mechanistically, induces serine-specific dephosphorylation of IRS1 or IRS2 upon ligation to its receptor, leading to the inhibitory cascade. In the nucleus, interacts with transcription factors such as retinoid X receptor-alpha/RXRA to regulate transcriptional signaling and apoptosis. The protein is Insulin-like growth factor-binding protein 3 (IGFBP3) of Sus scrofa (Pig).